A 151-amino-acid chain; its full sequence is UPF0178 protein Hhal_1913 (151 aa).

This sequence belongs to the UPF0178 family.

In Halorhodospira halophila (strain DSM 244 / SL1) (Ectothiorhodospira halophila (strain DSM 244 / SL1)), this protein is UPF0178 protein Hhal_1913.